Reading from the N-terminus, the 350-residue chain is Phenylalanine--tRNA ligase alpha subunit (350 aa).

E257 is a Mg(2+) binding site.

Belongs to the class-II aminoacyl-tRNA synthetase family. Phe-tRNA synthetase alpha subunit type 1 subfamily. As to quaternary structure, tetramer of two alpha and two beta subunits. Mg(2+) is required as a cofactor.

The protein resides in the cytoplasm. It carries out the reaction tRNA(Phe) + L-phenylalanine + ATP = L-phenylalanyl-tRNA(Phe) + AMP + diphosphate + H(+). This Listeria monocytogenes serovar 1/2a (strain ATCC BAA-679 / EGD-e) protein is Phenylalanine--tRNA ligase alpha subunit.